We begin with the raw amino-acid sequence, 242 residues long: Glucosamine-6-phosphate deaminase (242 aa).

The Proton acceptor; for enolization step role is filled by D67. N137 serves as the catalytic For ring-opening step. Residue H139 is the Proton acceptor; for ring-opening step of the active site. Residue E144 is the For ring-opening step of the active site.

This sequence belongs to the glucosamine/galactosamine-6-phosphate isomerase family. NagB subfamily.

The catalysed reaction is alpha-D-glucosamine 6-phosphate + H2O = beta-D-fructose 6-phosphate + NH4(+). It participates in amino-sugar metabolism; N-acetylneuraminate degradation; D-fructose 6-phosphate from N-acetylneuraminate: step 5/5. Functionally, catalyzes the reversible isomerization-deamination of glucosamine 6-phosphate (GlcN6P) to form fructose 6-phosphate (Fru6P) and ammonium ion. The protein is Glucosamine-6-phosphate deaminase of Staphylococcus haemolyticus (strain JCSC1435).